Here is a 309-residue protein sequence, read N- to C-terminus: Aromatic prenyltransferase (309 aa).

This sequence belongs to the aromatic prenyltransferase family.

Functionally, prenyltransferase that attaches isoprenoid moieties to carbon atoms of aromatic substrates in an enzyme-catalyzed Friedel-Crafts reaction. Shows specificity for dimethylallyl diphosphate (DMAPP) and does not accept geranyl diphosphate (GPP) or isopentenyl diphosphate (IPP). Prenylates the artificial substrate 2,7-dihydroxynaphthalene (2,7-DHN), as well as dihydrophenazine-1-carboxylic acid and 4-hydroxybenzoic acid at lower levels. Only traces of products are detected with aspulvinone E or flaviolin as substrates; and no product is formed with L-tryptophan, L-tyrosine, or 4-hydroxyphenylpyruvate. Ptf seems no to be involved in the prenylation reaction in the biosynthesis of aspulvinone H and J and the physiological function of ptf remains unknown. The polypeptide is Aromatic prenyltransferase (Sclerotinia sclerotiorum (strain ATCC 18683 / 1980 / Ss-1) (White mold)).